An 890-amino-acid polypeptide reads, in one-letter code: Translation initiation factor IF-2 (890 aa).

The tract at residues 45–304 (LIDHLNQKNS…LQQGFQKPAQ (260 aa)) is disordered. Positions 67 to 81 (STLNIPGTGGKSKSV) are enriched in polar residues. The span at 92 to 217 (VKRDPQEAER…RMAEENKWTD (126 aa)) shows a compositional bias: basic and acidic residues. Residues 252 to 266 (GRGRNAKAARPKKGN) show a composition bias toward basic residues. Residues 267 to 280 (KHSESKADREEARA) show a composition bias toward basic and acidic residues. The region spanning 389–558 (PRAPVVTIMG…LLQAEVLELK (170 aa)) is the tr-type G domain. The interval 398-405 (GHVDHGKT) is G1. Residue 398-405 (GHVDHGKT) coordinates GTP. Positions 423 to 427 (GITQH) are G2. The segment at 444-447 (DTPG) is G3. GTP is bound by residues 444–448 (DTPGH) and 498–501 (NKID). The tract at residues 498 to 501 (NKID) is G4. The tract at residues 534–536 (SAK) is G5. The residue at position 808 (Lys-808) is an N6-acetyllysine.

It belongs to the TRAFAC class translation factor GTPase superfamily. Classic translation factor GTPase family. IF-2 subfamily.

It is found in the cytoplasm. Its function is as follows. One of the essential components for the initiation of protein synthesis. Protects formylmethionyl-tRNA from spontaneous hydrolysis and promotes its binding to the 30S ribosomal subunits. Also involved in the hydrolysis of GTP during the formation of the 70S ribosomal complex. In Escherichia fergusonii (strain ATCC 35469 / DSM 13698 / CCUG 18766 / IAM 14443 / JCM 21226 / LMG 7866 / NBRC 102419 / NCTC 12128 / CDC 0568-73), this protein is Translation initiation factor IF-2.